The following is a 232-amino-acid chain: DNA repair and recombination protein RadB (232 aa).

The protein belongs to the eukaryotic RecA-like protein family. RadB subfamily.

Involved in DNA repair and in homologous recombination. May regulate the cleavage reactions of the branch-structured DNA. Has a very weak ATPase activity that is not stimulated by DNA. Binds DNA but does not promote DNA strands exchange. The polypeptide is DNA repair and recombination protein RadB (Methanosphaera stadtmanae (strain ATCC 43021 / DSM 3091 / JCM 11832 / MCB-3)).